Here is a 185-residue protein sequence, read N- to C-terminus: Calcium-binding protein CML37 (185 aa).

A compositionally biased stretch (polar residues) spans 1–12; it reads MTLAKNQKSSLS. The interval 1–45 is disordered; that stretch reads MTLAKNQKSSLSRLYKKVSSKRSESSRNLEDESRTSSNSSGSSSL. Residues 21 to 34 show a composition bias toward basic and acidic residues; it reads KRSESSRNLEDESR. The span at 35 to 44 shows a compositional bias: low complexity; it reads TSSNSSGSSS. 4 EF-hand domains span residues 45–80, 81–116, 119–154, and 155–185; these read LNVN…LGGA, LSSR…EDGS, ERRK…LGES, and CTVD…LMMR. Ca(2+)-binding residues include aspartate 58, asparagine 60, aspartate 62, lysine 64, glutamate 69, aspartate 94, aspartate 96, aspartate 98, and glutamate 105. 4 residues coordinate Ca(2+): aspartate 168, asparagine 170, aspartate 172, and glutamate 179.

In terms of assembly, binds to ABCG36. Expressed in cotyledons, stipule, young leaves and at the hypocotyl-root junction. In mature root, expressed in the stele, cortex, emerging lateral root, root tip and root cap. In mature plant, expressed at the base of cauline and floral branches, and in rosette and cauline leaves. Expressed from stage 9 to 14 of flower development in anthers. At stage 15, expressed in carpel, sepals, petals and pollen until dehiscence. Expressed in developing seeds and young siliques.

Functionally, potential calcium sensor that binds calcium in vitro. In Arabidopsis thaliana (Mouse-ear cress), this protein is Calcium-binding protein CML37.